Here is a 329-residue protein sequence, read N- to C-terminus: Serine/threonine-protein phosphatase PP1-alpha (329 aa).

Mn(2+)-binding residues include Asp64, His66, Asp92, and Asn124. The Proton donor role is filled by His125. Mn(2+) contacts are provided by His173 and His248. A disordered region spans residues 309–329 (GMNSGRPAVGGGRPGTTAGKK).

This sequence belongs to the PPP phosphatase family. PP-1 subfamily. Interacts with lab-1; the interaction is direct. Interacts with knl-1; the interaction is direct. Requires Mn(2+) as cofactor.

The catalysed reaction is O-phospho-L-seryl-[protein] + H2O = L-seryl-[protein] + phosphate. It carries out the reaction O-phospho-L-threonyl-[protein] + H2O = L-threonyl-[protein] + phosphate. Its function is as follows. Serine/threonine-protein phosphatase which antagonizes the function of air-2 in the regulation of chromosome cohesion. Dephosphorylates histone H3 at 'Ser-10'. Dephosphorylates translation initiation factor eIF2alpha. Involved in the activation of chloride channel clh-3 during cell swelling and meiotic maturation. This is Serine/threonine-protein phosphatase PP1-alpha (gsp-1) from Caenorhabditis briggsae.